The following is a 228-amino-acid chain: tRNA (guanine-N(1)-)-methyltransferase (228 aa).

S-adenosyl-L-methionine contacts are provided by residues glycine 108 and 127–132; that span reads VGDFIL.

The protein belongs to the RNA methyltransferase TrmD family. In terms of assembly, homodimer.

Its subcellular location is the cytoplasm. It carries out the reaction guanosine(37) in tRNA + S-adenosyl-L-methionine = N(1)-methylguanosine(37) in tRNA + S-adenosyl-L-homocysteine + H(+). Functionally, specifically methylates guanosine-37 in various tRNAs. In Metamycoplasma arthritidis (strain 158L3-1) (Mycoplasma arthritidis), this protein is tRNA (guanine-N(1)-)-methyltransferase.